The following is a 131-amino-acid chain: Small ribosomal subunit protein uS8 (131 aa).

This sequence belongs to the universal ribosomal protein uS8 family. As to quaternary structure, part of the 30S ribosomal subunit. Contacts proteins S5 and S12.

In terms of biological role, one of the primary rRNA binding proteins, it binds directly to 16S rRNA central domain where it helps coordinate assembly of the platform of the 30S subunit. In Wolbachia pipientis subsp. Culex pipiens (strain wPip), this protein is Small ribosomal subunit protein uS8.